The chain runs to 212 residues: UPF0319 protein PBPRA2789 (212 aa).

Residues 1–21 form the signal peptide; sequence MKKILLAFTLPLVLASQTAMA.

This sequence belongs to the UPF0319 family.

This is UPF0319 protein PBPRA2789 from Photobacterium profundum (strain SS9).